The following is a 185-amino-acid chain: Photosystem I assembly protein Ycf4 (185 aa).

Transmembrane regions (helical) follow at residues G20 to A40 and I57 to S77.

This sequence belongs to the Ycf4 family.

The protein resides in the plastid. It is found in the chloroplast thylakoid membrane. Seems to be required for the assembly of the photosystem I complex. The polypeptide is Photosystem I assembly protein Ycf4 (Lolium perenne (Perennial ryegrass)).